We begin with the raw amino-acid sequence, 343 residues long: NADH dehydrogenase [ubiquinone] 1 alpha subcomplex subunit 10, mitochondrial (343 aa).

Residues Met1–Lys23 constitute a mitochondrion transit peptide. Residue Lys110 is modified to N6-acetyllysine; alternate. N6-succinyllysine; alternate is present on Lys110. Ser238 is subject to Phosphoserine; by PINK1.

The protein belongs to the complex I NDUFA10 subunit family. Complex I is composed of 45 different subunits. This a component of the hydrophobic protein fraction. The cofactor is FAD. In terms of processing, phosphorylation at Ser-238 by PINK1 is required for the binding and/or reduction of the complex I substrate ubiquinone.

It localises to the mitochondrion matrix. In terms of biological role, accessory subunit of the mitochondrial membrane respiratory chain NADH dehydrogenase (Complex I), that is believed not to be involved in catalysis. Complex I functions in the transfer of electrons from NADH to the respiratory chain. The immediate electron acceptor for the enzyme is believed to be ubiquinone. This is NADH dehydrogenase [ubiquinone] 1 alpha subcomplex subunit 10, mitochondrial (NDUFA10) from Bos taurus (Bovine).